The chain runs to 214 residues: Probable transaldolase (214 aa).

Lys83 functions as the Schiff-base intermediate with substrate in the catalytic mechanism.

The protein belongs to the transaldolase family. Type 3B subfamily.

The protein resides in the cytoplasm. It carries out the reaction D-sedoheptulose 7-phosphate + D-glyceraldehyde 3-phosphate = D-erythrose 4-phosphate + beta-D-fructose 6-phosphate. It participates in carbohydrate degradation; pentose phosphate pathway; D-glyceraldehyde 3-phosphate and beta-D-fructose 6-phosphate from D-ribose 5-phosphate and D-xylulose 5-phosphate (non-oxidative stage): step 2/3. Its function is as follows. Transaldolase is important for the balance of metabolites in the pentose-phosphate pathway. In Streptococcus pyogenes serotype M2 (strain MGAS10270), this protein is Probable transaldolase.